Consider the following 472-residue polypeptide: GTPase HflX (472 aa).

Residues 1–21 are disordered; the sequence is MDTIDTPGEQGSQSFGNSLGA. Positions 230–396 constitute a Hflx-type G domain; the sequence is PTFALIGYTN…LMTEIIQEKS (167 aa). GTP-binding positions include 236-243, 261-265, 283-286, 349-352, and 374-376; these read GYTNSGKS, FATLD, DTVG, NKVD, and SAK. Residues S243 and T263 each contribute to the Mg(2+) site.

This sequence belongs to the TRAFAC class OBG-HflX-like GTPase superfamily. HflX GTPase family. In terms of assembly, monomer. Associates with the 50S ribosomal subunit. It depends on Mg(2+) as a cofactor.

Its subcellular location is the cytoplasm. Its function is as follows. GTPase that associates with the 50S ribosomal subunit and may have a role during protein synthesis or ribosome biogenesis. Specific for GTP. This is GTPase HflX from Chlamydia pneumoniae (Chlamydophila pneumoniae).